The following is a 595-amino-acid chain: P2X purinoceptor 7 (595 aa).

Residues 1–22 (MPACCSCSDVFQYETNKVTRIQ) lie on the Cytoplasmic side of the membrane. Cys4 carries the S-palmitoyl cysteine lipid modification. The chain crosses the membrane as a helical span at residues 23–46 (SMNYGTIKWFFHVIIFSYVCFALV). Over 47 to 328 (SDKLYQRKEP…ILVFGTGGKF (282 aa)) the chain is Extracellular. 3 disulfides stabilise this stretch: Cys119-Cys168, Cys129-Cys152, and Cys135-Cys162. Residues Arg125 and Arg133 each carry the ADP-ribosylarginine modification. Asn187 carries an N-linked (GlcNAc...) asparagine glycan. An ATP-binding site is contributed by Thr189. 2 N-linked (GlcNAc...) asparagine glycosylation sites follow: Asn202 and Asn213. The cysteines at positions 216 and 226 are disulfide-linked. N-linked (GlcNAc...) asparagine glycosylation is present at Asn241. Cys260 and Cys269 form a disulfide bridge. Asn284 is a glycosylation site (N-linked (GlcNAc...) asparagine). ATP contacts are provided by Arg294 and Lys311. The helical transmembrane segment at 329–353 (DIIQLVVYIGSTLSYFGLAAVFIDF) threads the bilayer. Ser342 provides a ligand contact to Na(+). Residue Tyr343 is modified to Phosphotyrosine. Over 354-595 (LIDTYSSNCC…GQYSGFKSPY (242 aa)) the chain is Cytoplasmic. The segment at 360-377 (SNCCRSHIYPWCKCCQPC) is C-cys anchor. 4 S-palmitoyl cysteine lipidation sites follow: Cys362, Cys363, Cys374, and Cys377. Ser390 carries the post-translational modification Phosphoserine. The segment at 395–595 (KPTLKYVSFV…GQYSGFKSPY (201 aa)) is cytoplasmic ballast. 3 residues coordinate Zn(2+): Cys479, Cys499, and Cys506. 4 residues coordinate GTP: Arg546, His547, Tyr550, and Ala567. Cys572 lines the Zn(2+) pocket. Positions 583, 589, and 590 each coordinate GTP.

The protein belongs to the P2X receptor family. In terms of assembly, homotrimers. Interacts with LAMA3, ITGB2, ACTB, ACTN4, SVIL, MPP3, HSPA1, HSPCB, HSPA8, PIK230 and PTPRB. Interacts (via C-terminus) with EMP2. Interacts with isoform B; this interaction potentiates P2RX7 responses. Post-translationally, phosphorylation results in its inactivation. ADP-ribosylation at Arg-125 is necessary and sufficient to activate P2RX7 and gate the channel. In terms of processing, palmitoylation of several cysteines in the C-terminal cytoplasmic tail is required for efficient localization to cell surface. Palmitoylation prevents channel desensitization by physically anchoring the palmitoylated groups to the membrane. Widely expressed with highest levels in brain and immune tissues. In terms of tissue distribution, predominant form in many tissues.

It localises to the cell membrane. It carries out the reaction Ca(2+)(in) = Ca(2+)(out). It catalyses the reaction K(+)(in) = K(+)(out). The catalysed reaction is Na(+)(in) = Na(+)(out). With respect to regulation, activated by high extracellular ATP levels (0.1-2.5 mM). The synthetic analog 2'(3')-O-(4-benzoylbenzoyl)ATP (BzATP) acts as a potent agonist. Does not undergo desensitization, instead, undergoes a facilitation process where currents progressively increase with repetitive or prolonged agonist application. Palmitoylation prevents channel desensitization. The permeability of the P2RX7 channel is modulated by the amount of cholesterol in the plasma membrane. Functionally, ATP-gated nonselective transmembrane cation channel that requires high millimolar concentrations of ATP for activation. Upon ATP binding, it rapidly opens to allow the influx of small cations Na(+) and Ca(2+), and the K(+) efflux. Also has the ability to form a large pore in the cell membrane, allowing the passage of large cationic molecules. In microglia, may mediate NADPH transport across the plasma membrane. In immune cells, P2RX7 acts as a molecular sensor in pathological inflammatory states by detecting and responding to high local concentrations of extracellar ATP. In microglial cells, P2RX7 activation leads to the release of pro-inflammatory cytokines, such as IL-1beta and IL-18, through the activation of the NLRP3 inflammasome and caspase-1. Cooperates with KCNK6 to activate NLRP3 inflammasome. Activates death pathways leading to apoptosis and autophagy. Activates death pathways leading to pyroptosis. Its function is as follows. Shows ion channel activity but no macropore function. Non-functional channel. This chain is P2X purinoceptor 7 (P2RX7), found in Homo sapiens (Human).